The following is a 249-amino-acid chain: Glucosamine-6-phosphate deaminase (249 aa).

D67 functions as the Proton acceptor; for enolization step in the catalytic mechanism. Residue N136 is the For ring-opening step of the active site. The active-site Proton acceptor; for ring-opening step is H138. E143 acts as the For ring-opening step in catalysis.

It belongs to the glucosamine/galactosamine-6-phosphate isomerase family. NagB subfamily.

The catalysed reaction is alpha-D-glucosamine 6-phosphate + H2O = beta-D-fructose 6-phosphate + NH4(+). It functions in the pathway amino-sugar metabolism; N-acetylneuraminate degradation; D-fructose 6-phosphate from N-acetylneuraminate: step 5/5. In terms of biological role, catalyzes the reversible isomerization-deamination of glucosamine 6-phosphate (GlcN6P) to form fructose 6-phosphate (Fru6P) and ammonium ion. In Clostridium botulinum (strain Eklund 17B / Type B), this protein is Glucosamine-6-phosphate deaminase.